Reading from the N-terminus, the 82-residue chain is MVTIRLSRGGAKKRPFYQIVVADSRSPRDGRFIERVGFFNPLATGKAERLRLDLDRVNAWVEKGASLSDRVSALVKEVQKAA.

Belongs to the bacterial ribosomal protein bS16 family.

This chain is Small ribosomal subunit protein bS16, found in Actinobacillus succinogenes (strain ATCC 55618 / DSM 22257 / CCUG 43843 / 130Z).